Consider the following 319-residue polypeptide: Acetyl-coenzyme A carboxylase carboxyl transferase subunit alpha (319 aa).

The CoA carboxyltransferase C-terminal domain occupies 35–296 (NIDEEVHRLR…KAQLLADLAD (262 aa)).

Belongs to the AccA family. As to quaternary structure, acetyl-CoA carboxylase is a heterohexamer composed of biotin carboxyl carrier protein (AccB), biotin carboxylase (AccC) and two subunits each of ACCase subunit alpha (AccA) and ACCase subunit beta (AccD).

Its subcellular location is the cytoplasm. The enzyme catalyses N(6)-carboxybiotinyl-L-lysyl-[protein] + acetyl-CoA = N(6)-biotinyl-L-lysyl-[protein] + malonyl-CoA. The protein operates within lipid metabolism; malonyl-CoA biosynthesis; malonyl-CoA from acetyl-CoA: step 1/1. Its function is as follows. Component of the acetyl coenzyme A carboxylase (ACC) complex. First, biotin carboxylase catalyzes the carboxylation of biotin on its carrier protein (BCCP) and then the CO(2) group is transferred by the carboxyltransferase to acetyl-CoA to form malonyl-CoA. This is Acetyl-coenzyme A carboxylase carboxyl transferase subunit alpha from Citrobacter koseri (strain ATCC BAA-895 / CDC 4225-83 / SGSC4696).